Consider the following 118-residue polypeptide: Large ribosomal subunit protein bL20 (118 aa).

The protein belongs to the bacterial ribosomal protein bL20 family.

Functionally, binds directly to 23S ribosomal RNA and is necessary for the in vitro assembly process of the 50S ribosomal subunit. It is not involved in the protein synthesizing functions of that subunit. The sequence is that of Large ribosomal subunit protein bL20 from Azotobacter vinelandii (strain DJ / ATCC BAA-1303).